A 652-amino-acid chain; its full sequence is Vitrin (652 aa).

Residues 1 to 26 (MGIVVLTMKASVIEMFLVLLVTGIQS) form the signal peptide. The LCCL domain occupies 40–133 (TVPQISCDVR…LSLPRWRESF (94 aa)). 2 disulfide bridges follow: Cys-46–Cys-62 and Cys-66–Cys-86. 2 disordered regions span residues 137–181 (EGKP…AAQP) and 196–231 (THTTLPKPSPSAGSTASGLRPQPAGQRSKDLGEPAL). Over residues 145-158 (TYPSSLTYSSSKSP) the composition is skewed to low complexity. The span at 196–212 (THTTLPKPSPSAGSTAS) shows a compositional bias: polar residues. VWFA domains are found at residues 267 to 452 (DLSF…VKRV) and 469 to 638 (DIGF…VPKV). The N-linked (GlcNAc...) asparagine glycan is linked to Asn-494.

As to quaternary structure, binds dermatan sulfate and chondroitin sulfate.

Its subcellular location is the secreted. The protein resides in the extracellular space. It localises to the extracellular matrix. Promotes matrix assembly and cell adhesiveness. Plays a role in spinal cord formation by regulating the proliferation and differentiation of neural stem cells. The protein is Vitrin (VIT) of Bos taurus (Bovine).